The chain runs to 495 residues: tRNA(Ile)-lysidine synthase (495 aa).

26–31 (SGGSDS) is a binding site for ATP.

The protein belongs to the tRNA(Ile)-lysidine synthase family.

Its subcellular location is the cytoplasm. It carries out the reaction cytidine(34) in tRNA(Ile2) + L-lysine + ATP = lysidine(34) in tRNA(Ile2) + AMP + diphosphate + H(+). In terms of biological role, ligates lysine onto the cytidine present at position 34 of the AUA codon-specific tRNA(Ile) that contains the anticodon CAU, in an ATP-dependent manner. Cytidine is converted to lysidine, thus changing the amino acid specificity of the tRNA from methionine to isoleucine. This chain is tRNA(Ile)-lysidine synthase, found in Bartonella tribocorum (strain CIP 105476 / IBS 506).